The following is a 512-amino-acid chain: MAFTLTILVPCMVLALVAARPVLYWVLSVVIDAFLRWKYPLPHHAGSKPMPRARYTWPNGQGTEKFFNGRSAARQWRQRWGPIYQIWSGWCPEIVLTTPTHAVQFFRNSHRHTKAVNNDSGWLFGEVLGVCVGLLSGTDWKRVRQQVEDGFSRPTAARYTGDLVFLAREYLQNTLLASSEQSLENKGIIHVEPAKTLQFYPFLSVAQILFGRLSPMQRTQLTTLAPLREELFKEVIRGGINRLSIAPWFKSRGVRLLNEFQTQWEQFVEDAYHAAVKRNQSPRPLVIGLWEAYQAGTISKRECLQTLDESLYANLDVTTHALSWNVLLLAENGEAQTELRQEVLSALQSEASESYERYIDRDDTFLAACILESARLRPILPFSNPESAPEDLYVDGYLIPANTNVIVDAQAINIDNPYWVNGTQYNPRRFFSLNKSDVRHNMWRFGFGPRQCLGKHIGERMLKAIVAEIIRQYVISISADSALKNDLQEDSWVGLPATRIQCVPVGREVEKN.

A signal peptide spans 1 to 19; sequence MAFTLTILVPCMVLALVAA. Residues Asn-118, Asn-421, and Asn-434 are each glycosylated (N-linked (GlcNAc...) asparagine). Cys-452 contributes to the heme binding site.

The protein belongs to the cytochrome P450 family. It depends on heme as a cofactor.

The protein operates within mycotoxin biosynthesis. In terms of biological role, cytochrome P450 monooxygenase; part of the gene cluster that mediates the biosynthesis of gliotoxin, a member of the epipolythiodioxopiperazine (ETP) class of toxins characterized by a disulfide bridged cyclic dipeptide. The first step in gliotoxin biosynthesis is the condensation of serine and phenylalanine to form the cyclo-L-phenylalanyl-L-serine diketopiperazine (DKP) by the NRPS gliP. GliP is also able to produce the DKP cyclo-L-tryptophanyl-L-serine, suggesting that the substrate specificity of the first adenylation (A) domain in gliP is sufficiently relaxed to accommodate both L-Phe and L-Trp. The cytochrome P450 monooxygenase gliC has been shown to catalyze the subsequent hydroxylation of the alpha-carbon of L-Phe in cyclo-L-phenylalanyl-L-serine whereas the second cytochrome P450 enzyme, gliF, is presumably involved in the modification of the DKP side chain. The glutathione S-transferase (GST) gliG then forms a bis-glutathionylated biosynthetic intermediate which is responsible for the sulfurization of gliotoxin. This bis-glutathionylated intermediate is subsequently processed by the gamma-glutamyl cyclotransferase gliK to remove both gamma-glutamyl moieties. Subsequent processing via gliI yields a biosynthetic intermediate, which is N-methylated via the N-methyltransferase gliN, before the gliotoxin oxidoreductase gliT-mediated disulfide bridge closure. GliN-mediated amide methylation confers stability to ETP, damping the spontaneous formation of tri- and tetrasulfides. Intracellular dithiol gliotoxin oxidized by gliT is subsequently effluxed by gliA. Gliotoxin contributes to pathogenesis during invasive aspergillosis. In macrophages and neutrophils, gliotoxin showed inhibition of various different cell functions including cytokine production, antigen presentation, phagocytosis, and production of reactive oxygen species. The polypeptide is Cytochrome P450 monooxygenase gliC (Aspergillus fumigatus (strain ATCC MYA-4609 / CBS 101355 / FGSC A1100 / Af293) (Neosartorya fumigata)).